Reading from the N-terminus, the 352-residue chain is C-C chemokine receptor type 5 (352 aa).

Residues methionine 1–alanine 30 are Extracellular-facing. Residue tyrosine 3 is modified to Sulfotyrosine. O-linked (GalNAc...) serine glycans are attached at residues serine 6 and serine 7. 3 positions are modified to sulfotyrosine: tyrosine 10, tyrosine 14, and tyrosine 15. Disulfide bonds link cysteine 20/cysteine 269 and cysteine 101/cysteine 178. A helical transmembrane segment spans residues arginine 31 to cysteine 58. The Cytoplasmic segment spans residues lysine 59–tyrosine 68. The chain crosses the membrane as a helical span at residues leucine 69–tyrosine 89. The Extracellular segment spans residues alanine 90–glutamine 102. Residues leucine 103–isoleucine 124 form a helical membrane-spanning segment. Topologically, residues aspartate 125 to threonine 141 are cytoplasmic. Residues valine 142–phenylalanine 166 form a helical membrane-spanning segment. Over threonine 167–isoleucine 198 the chain is Extracellular. The helical transmembrane segment at valine 199–leucine 218 threads the bilayer. The Cytoplasmic portion of the chain corresponds to lysine 219–arginine 235. The helical transmembrane segment at leucine 236–phenylalanine 260 threads the bilayer. Residues glutamine 261–glutamine 277 are Extracellular-facing. The chain crosses the membrane as a helical span at residues alanine 278 to glycine 301. Topologically, residues glutamate 302 to leucine 352 are cytoplasmic. S-palmitoyl cysteine attachment occurs at residues cysteine 321, cysteine 323, and cysteine 324. Phosphoserine; by BARK1 is present on residues serine 336, serine 337, serine 342, and serine 349.

This sequence belongs to the G-protein coupled receptor 1 family. As to quaternary structure, interacts with PRAF2. Efficient ligand binding to CCL3/MIP-1alpha and CCL4/MIP-1beta requires sulfation, O-glycosylation and sialic acid modifications. Glycosylation on Ser-6 is required for efficient binding of CCL4. Interacts with GRK2. Interacts with ARRB1 and ARRB2. Interacts with CNIH4. Interacts with S100A4; this interaction stimulates T-lymphocyte chemotaxis. Sulfated on at least 2 of the N-terminal tyrosines. Sulfation is required for efficient binding of the chemokines, CCL3 and CCL4. Post-translationally, palmitoylation in the C-terminal is important for cell surface expression. In terms of processing, phosphorylation on serine residues in the C-terminal is stimulated by binding CC chemokines especially by APO-RANTES. O-glycosylated, but not N-glycosylated. Ser-6 appears to be the major site even if Ser-7 may be also O-glycosylated. Also sialylated glycans present which contribute to chemokine binding. Thr-16 and Ser-17 may also be glycosylated and, if so, with small moieties such as a T-antigen.

It is found in the cell membrane. Receptor for a number of inflammatory CC-chemokines including CCL3/MIP-1-alpha, CCL4/MIP-1-beta and RANTES and subsequently transduces a signal by increasing the intracellular calcium ion level. May play a role in the control of granulocytic lineage proliferation or differentiation. Participates in T-lymphocyte migration to the infection site by acting as a chemotactic receptor. In Trachypithecus francoisi (Francois' leaf monkey), this protein is C-C chemokine receptor type 5 (CCR5).